Here is a 442-residue protein sequence, read N- to C-terminus: Endothelin receptor type B (442 aa).

An N-terminal signal peptide occupies residues 1–26 (MQPPPSLCGRALVALVLACGLSRIWG). Residues 27–101 (EERGFPPDRA…GPIEIKETFK (75 aa)) are Extracellular-facing. Asparagine 59 carries an N-linked (GlcNAc...) asparagine glycan. The tract at residues 69–88 (AEVPKGDRTAGSPPRTISPP) is disordered. A helical transmembrane segment spans residues 102-126 (YINTVVSCLVFVLGIIGNSTLLRII). At 127-137 (YKNKCMRNGPN) the chain is on the cytoplasmic side. Residues 138–163 (ILIASLALGDLLHIVIDIPINVYKLL) form a helical membrane-spanning segment. Residues 164-175 (AEDWPFGAEMCK) lie on the Extracellular side of the membrane. A disulfide bridge links cysteine 174 with cysteine 255. The chain crosses the membrane as a helical span at residues 176–197 (LVPFIQKASVGITVLSLCALSI). The Cytoplasmic segment spans residues 198–218 (DRYRAVASWSRIKGIGVPKWT). A helical transmembrane segment spans residues 219–243 (AVEIVLIWVVSVVLAVPEAIGFDII). The Extracellular portion of the chain corresponds to 244–271 (TMDYKGSYLRICLLHPVQKTAFMQFYKT). A helical membrane pass occupies residues 272 to 296 (AKDWWLFSFYFCLPLAITAFFYTLM). Over 297-324 (TCEMLRKKSGMQIALNDHLKQRREVAKT) the chain is Cytoplasmic. The residue at position 305 (serine 305) is a Phosphoserine. The chain crosses the membrane as a helical span at residues 325–350 (VFCLVLVFALCWLPLHLSRILKLTLY). Over 351 to 362 (NQNDPNRCELLS) the chain is Extracellular. The helical transmembrane segment at 363 to 389 (FLLVLDYIGINMASLNSCINPIALYLV) threads the bilayer. Topologically, residues 390 to 442 (SKRFKNCFKSCLCCWCQSFEEKQSLEEKQSCLKFKANDHGYDNFRSSNKYSSS) are cytoplasmic. 3 S-palmitoyl cysteine lipidation sites follow: cysteine 402, cysteine 403, and cysteine 405. A Phosphoserine modification is found at serine 419. Position 439 is a phosphotyrosine (tyrosine 439). Serine 440, serine 441, and serine 442 each carry phosphoserine.

This sequence belongs to the G-protein coupled receptor 1 family. Endothelin receptor subfamily. EDNRB sub-subfamily. In terms of processing, palmitoylation of Cys-402 was confirmed by the palmitoylation of Cys-402 in a deletion mutant lacking both Cys-403 and Cys-405. In terms of tissue distribution, expressed in placental stem villi vessels, but not in cultured placental villi smooth muscle cells.

The protein resides in the cell membrane. Non-specific receptor for endothelin 1, 2, and 3. Mediates its action by association with G proteins that activate a phosphatidylinositol-calcium second messenger system. This chain is Endothelin receptor type B, found in Homo sapiens (Human).